Here is a 247-residue protein sequence, read N- to C-terminus: Ubiquinone biosynthesis O-methyltransferase (247 aa).

Residues Arg39, Gly70, Asp91, and Met134 each contribute to the S-adenosyl-L-methionine site.

This sequence belongs to the methyltransferase superfamily. UbiG/COQ3 family.

The enzyme catalyses a 3-demethylubiquinol + S-adenosyl-L-methionine = a ubiquinol + S-adenosyl-L-homocysteine + H(+). The catalysed reaction is a 3-(all-trans-polyprenyl)benzene-1,2-diol + S-adenosyl-L-methionine = a 2-methoxy-6-(all-trans-polyprenyl)phenol + S-adenosyl-L-homocysteine + H(+). Its pathway is cofactor biosynthesis; ubiquinone biosynthesis. Its function is as follows. O-methyltransferase that catalyzes the 2 O-methylation steps in the ubiquinone biosynthetic pathway. This is Ubiquinone biosynthesis O-methyltransferase from Cereibacter sphaeroides (strain ATCC 17025 / ATH 2.4.3) (Rhodobacter sphaeroides).